The chain runs to 260 residues: Granzyme A (260 aa).

An N-terminal signal peptide occupies residues 1–26 (MRNASGPRGPSLATLLFLLLIPEGGC). The propeptide at 27–28 (ER) is activation peptide. The 229-residue stretch at 29–257 (IIGGDTVVPH…HLNWIKKIMK (229 aa)) folds into the Peptidase S1 domain. Cysteine 54 and cysteine 70 are disulfide-bonded. Catalysis depends on charge relay system residues histidine 69 and aspartate 113. Intrachain disulfides connect cysteine 147/cysteine 217, cysteine 178/cysteine 196, and cysteine 207/cysteine 232. N-linked (GlcNAc...) asparagine glycans are attached at residues asparagine 157 and asparagine 169. The active-site Charge relay system is the serine 211.

This sequence belongs to the peptidase S1 family. Granzyme subfamily. In terms of assembly, homodimer; disulfide-linked. Interacts with APEX1. In terms of tissue distribution, found in cytotoxic lymphocytes and in normal lymphoid tissues such as thymus and spleen. As to expression, more abundant in lymphoid tissues than isoform HF2.

The protein resides in the secreted. It localises to the cytoplasmic granule. It catalyses the reaction Hydrolysis of proteins, including fibronectin, type IV collagen and nucleolin. Preferential cleavage: -Arg-|-Xaa-, -Lys-|-Xaa- &gt;&gt; -Phe-|-Xaa- in small molecule substrates.. Abundant protease in the cytosolic granules of cytotoxic T-cells and NK-cells which activates caspase-independent pyroptosis when delivered into the target cell through the immunological synapse. It cleaves after Lys or Arg. Cleaves APEX1 after 'Lys-31' and destroys its oxidative repair activity. Cleaves the nucleosome assembly protein SET after 'Lys-189', which disrupts its nucleosome assembly activity and allows the SET complex to translocate into the nucleus to nick and degrade the DNA. In Mus musculus (Mouse), this protein is Granzyme A (Gzma).